Consider the following 308-residue polypeptide: Aspartate carbamoyltransferase catalytic subunit (308 aa).

2 residues coordinate carbamoyl phosphate: R57 and T58. Residue K86 coordinates L-aspartate. Residues R107, H135, and Q138 each coordinate carbamoyl phosphate. Residues R168 and R228 each coordinate L-aspartate. L267 and P268 together coordinate carbamoyl phosphate.

It belongs to the aspartate/ornithine carbamoyltransferase superfamily. ATCase family. In terms of assembly, heterododecamer (2C3:3R2) of six catalytic PyrB chains organized as two trimers (C3), and six regulatory PyrI chains organized as three dimers (R2).

It catalyses the reaction carbamoyl phosphate + L-aspartate = N-carbamoyl-L-aspartate + phosphate + H(+). It functions in the pathway pyrimidine metabolism; UMP biosynthesis via de novo pathway; (S)-dihydroorotate from bicarbonate: step 2/3. In terms of biological role, catalyzes the condensation of carbamoyl phosphate and aspartate to form carbamoyl aspartate and inorganic phosphate, the committed step in the de novo pyrimidine nucleotide biosynthesis pathway. This chain is Aspartate carbamoyltransferase catalytic subunit, found in Leptospira borgpetersenii serovar Hardjo-bovis (strain JB197).